Reading from the N-terminus, the 132-residue chain is MVMTDPIADMLTRIRNANMVRHEKLEVPASKIKKEIAELLKREGFIRDVEYIEDNKQGILRIFLKYGANNERVITGLKRISKPGLRVYAKADEVPRVLNGLGIALVSTSKGVMTDKDARQLQTGGEVVAYVW.

This sequence belongs to the universal ribosomal protein uS8 family. Part of the 30S ribosomal subunit. Contacts proteins S5 and S12.

Functionally, one of the primary rRNA binding proteins, it binds directly to 16S rRNA central domain where it helps coordinate assembly of the platform of the 30S subunit. In Bacillus anthracis (strain A0248), this protein is Small ribosomal subunit protein uS8.